A 1178-amino-acid polypeptide reads, in one-letter code: DNA-directed RNA polymerase subunit beta (1178 aa).

The interval 1-37 (MLEGCILADSRQSKTAASPSPSRPQSSSNNSVPGAPN) is disordered. The span at 18 to 33 (SPSPSRPQSSSNNSVP) shows a compositional bias: low complexity.

The protein belongs to the RNA polymerase beta chain family. In terms of assembly, the RNAP catalytic core consists of 2 alpha, 1 beta, 1 beta' and 1 omega subunit. When a sigma factor is associated with the core the holoenzyme is formed, which can initiate transcription.

The catalysed reaction is RNA(n) + a ribonucleoside 5'-triphosphate = RNA(n+1) + diphosphate. DNA-dependent RNA polymerase catalyzes the transcription of DNA into RNA using the four ribonucleoside triphosphates as substrates. In Mycobacterium tuberculosis (strain CDC 1551 / Oshkosh), this protein is DNA-directed RNA polymerase subunit beta.